We begin with the raw amino-acid sequence, 599 residues long: Fructan 1-exohydrolase (599 aa).

The first 16 residues, 1–16 (MAQAWAFLLLPALALA), serve as a signal peptide directing secretion. Asp-78 is a catalytic residue. Asn-171, Asn-239, and Asn-251 each carry an N-linked (GlcNAc...) asparagine glycan. A disulfide bridge links Cys-449 with Cys-495.

It belongs to the glycosyl hydrolase 32 family.

It carries out the reaction Hydrolysis of terminal, non-reducing (2-&gt;1)-linked beta-D-fructofuranose residues in fructans.. With respect to regulation, inhibited by sucrose. In terms of biological role, hydrolyzes inulin-type beta-(2,1)-fructans. May play a role as a beta-(2,1)-trimmer during graminan biosynthesis. This chain is Fructan 1-exohydrolase, found in Hordeum vulgare (Barley).